The following is a 288-amino-acid chain: ATP synthase gamma chain (288 aa).

This sequence belongs to the ATPase gamma chain family. F-type ATPases have 2 components, CF(1) - the catalytic core - and CF(0) - the membrane proton channel. CF(1) has five subunits: alpha(3), beta(3), gamma(1), delta(1), epsilon(1). CF(0) has three main subunits: a, b and c.

It is found in the cell inner membrane. Its function is as follows. Produces ATP from ADP in the presence of a proton gradient across the membrane. The gamma chain is believed to be important in regulating ATPase activity and the flow of protons through the CF(0) complex. The protein is ATP synthase gamma chain of Laribacter hongkongensis (strain HLHK9).